An 809-amino-acid polypeptide reads, in one-letter code: Phenylalanine--tRNA ligase beta subunit (809 aa).

The tRNA-binding domain maps to 39-154 (APPTSKIVVG…EDTPVGQDIR (116 aa)). Positions 405–480 (PQRAPVKMRV…RIYGFEKIPA (76 aa)) constitute a B5 domain. Mg(2+)-binding residues include aspartate 458, aspartate 464, glutamate 467, and glutamate 468. The FDX-ACB domain occupies 707–808 (SKFPPVRRDI…RMARAGARLR (102 aa)).

It belongs to the phenylalanyl-tRNA synthetase beta subunit family. Type 1 subfamily. Tetramer of two alpha and two beta subunits. Mg(2+) serves as cofactor.

It is found in the cytoplasm. The catalysed reaction is tRNA(Phe) + L-phenylalanine + ATP = L-phenylalanyl-tRNA(Phe) + AMP + diphosphate + H(+). This Burkholderia lata (strain ATCC 17760 / DSM 23089 / LMG 22485 / NCIMB 9086 / R18194 / 383) protein is Phenylalanine--tRNA ligase beta subunit.